Here is an 87-residue protein sequence, read N- to C-terminus: Small ribosomal subunit protein bS16 (87 aa).

It belongs to the bacterial ribosomal protein bS16 family.

In Nitrosospira multiformis (strain ATCC 25196 / NCIMB 11849 / C 71), this protein is Small ribosomal subunit protein bS16.